Consider the following 149-residue polypeptide: Calmodulin-like protein (149 aa).

4 consecutive EF-hand domains span residues 6 to 41 (TTQA…VGSN), 42 to 76 (PTQQ…KMKY), 78 to 113 (DSEA…IGEK), and 113 to 148 (KLTK…SKSF). Ca(2+) is bound by residues aspartate 19, aspartate 21, aspartate 23, lysine 25, and glutamate 30.

This sequence belongs to the calmodulin family.

It localises to the contractile vacuole. Mediates the control of a large number of enzymes, ion channels and other proteins by Ca(2+) ions. Among the enzymes to be stimulated by the calmodulin-Ca(2+) complex are a number of protein kinases and phosphatases. In Dictyostelium discoideum (Social amoeba), this protein is Calmodulin-like protein (calB).